Here is a 316-residue protein sequence, read N- to C-terminus: Neuroguidin (316 aa).

Disordered regions lie at residues 143–172 and 280–316; these read SEAD…VKKY and SALT…RKRH. Acidic residues predominate over residues 145-157; that stretch reads ADEGESDSGEDCA. Basic residues predominate over residues 297 to 316; the sequence is KKSRKGPKKSKKRKGFRKRH.

This sequence belongs to the SAS10 family. Part of the small subunit (SSU) processome, composed of more than 70 proteins and the RNA chaperone small nucleolar RNA (snoRNA) U3.

It is found in the nucleus. The protein localises to the nucleolus. The protein resides in the chromosome. It localises to the centromere. Its subcellular location is the cytoplasm. It is found in the cell projection. The protein localises to the axon. The protein resides in the dendrite. It localises to the filopodium. Functionally, part of the small subunit (SSU) processome, first precursor of the small eukaryotic ribosomal subunit. During the assembly of the SSU processome in the nucleolus, many ribosome biogenesis factors, an RNA chaperone and ribosomal proteins associate with the nascent pre-rRNA and work in concert to generate RNA folding, modifications, rearrangements and cleavage as well as targeted degradation of pre-ribosomal RNA by the RNA exosome. Its dissociation from the complex determines the transition from state pre-A1 to state pre-A1*. May inhibit mRNA translation. The sequence is that of Neuroguidin (ngdn) from Xenopus tropicalis (Western clawed frog).